Consider the following 100-residue polypeptide: Small ribosomal subunit protein uS14c (100 aa).

It belongs to the universal ribosomal protein uS14 family. As to quaternary structure, part of the 30S ribosomal subunit.

The protein resides in the plastid. Its subcellular location is the chloroplast. Binds 16S rRNA, required for the assembly of 30S particles. The polypeptide is Small ribosomal subunit protein uS14c (Aethionema cordifolium (Lebanon stonecress)).